A 464-amino-acid polypeptide reads, in one-letter code: Trehalose-6-phosphate synthase (464 aa).

Residue arginine 10 participates in D-glucose 6-phosphate binding. UDP-alpha-D-glucose is bound at residue 23–24 (GG). Residues tyrosine 81 and aspartate 135 each coordinate D-glucose 6-phosphate. Residues arginine 268 and lysine 273 each contribute to the UDP-alpha-D-glucose site. Arginine 306 contributes to the D-glucose 6-phosphate binding site. 371-375 (LVAKE) contacts UDP-alpha-D-glucose.

This sequence belongs to the glycosyltransferase 20 family. As to quaternary structure, homotetramer.

The enzyme catalyses D-glucose 6-phosphate + UDP-alpha-D-glucose = alpha,alpha-trehalose 6-phosphate + UDP + H(+). It functions in the pathway glycan biosynthesis; trehalose biosynthesis. Probably involved in the osmoprotection via the biosynthesis of trehalose. Catalyzes the transfer of glucose from UDP-alpha-D-glucose (UDP-Glc) to D-glucose 6-phosphate (Glc-6-P) to form trehalose-6-phosphate. Acts with retention of the anomeric configuration of the UDP-sugar donor. In Sinorhizobium fredii (strain NBRC 101917 / NGR234), this protein is Trehalose-6-phosphate synthase.